Consider the following 155-residue polypeptide: DNA gyrase inhibitor (155 aa).

The protein belongs to the DNA gyrase inhibitor family. Interacts with DNA gyrase.

Its subcellular location is the cytoplasm. Its function is as follows. Inhibits the supercoiling activity of DNA gyrase. Acts by inhibiting DNA gyrase at an early step, prior to (or at the step of) binding of DNA by the gyrase. It protects cells against toxins that target DNA gyrase, by inhibiting activity of these toxins and reducing the formation of lethal double-strand breaks in the cell. The polypeptide is DNA gyrase inhibitor (Edwardsiella ictaluri (strain 93-146)).